The chain runs to 287 residues: Shikimate kinase (287 aa).

An ATP-binding site is contributed by 87 to 97; it reads PLASGLKSSSA.

It belongs to the GHMP kinase family. Archaeal shikimate kinase subfamily.

It localises to the cytoplasm. It carries out the reaction shikimate + ATP = 3-phosphoshikimate + ADP + H(+). The protein operates within metabolic intermediate biosynthesis; chorismate biosynthesis; chorismate from D-erythrose 4-phosphate and phosphoenolpyruvate: step 5/7. In Methanococcoides burtonii (strain DSM 6242 / NBRC 107633 / OCM 468 / ACE-M), this protein is Shikimate kinase.